The chain runs to 731 residues: 1,4-alpha-glucan branching enzyme GlgB (731 aa).

D411 acts as the Nucleophile in catalysis. E464 serves as the catalytic Proton donor.

This sequence belongs to the glycosyl hydrolase 13 family. GlgB subfamily. As to quaternary structure, monomer.

The catalysed reaction is Transfers a segment of a (1-&gt;4)-alpha-D-glucan chain to a primary hydroxy group in a similar glucan chain.. It participates in glycan biosynthesis; glycogen biosynthesis. In terms of biological role, catalyzes the formation of the alpha-1,6-glucosidic linkages in glycogen by scission of a 1,4-alpha-linked oligosaccharide from growing alpha-1,4-glucan chains and the subsequent attachment of the oligosaccharide to the alpha-1,6 position. The chain is 1,4-alpha-glucan branching enzyme GlgB from Mycobacterium bovis (strain ATCC BAA-935 / AF2122/97).